Here is a 139-residue protein sequence, read N- to C-terminus: Large ribosomal subunit protein bL20 (139 aa).

This sequence belongs to the bacterial ribosomal protein bL20 family.

In terms of biological role, binds directly to 23S ribosomal RNA and is necessary for the in vitro assembly process of the 50S ribosomal subunit. It is not involved in the protein synthesizing functions of that subunit. This Leuconostoc mesenteroides subsp. mesenteroides (strain ATCC 8293 / DSM 20343 / BCRC 11652 / CCM 1803 / JCM 6124 / NCDO 523 / NBRC 100496 / NCIMB 8023 / NCTC 12954 / NRRL B-1118 / 37Y) protein is Large ribosomal subunit protein bL20.